The following is a 60-amino-acid chain: Cytotoxin 1 (60 aa).

Disulfide bonds link C3–C21, C14–C38, C42–C53, and C54–C59.

It belongs to the three-finger toxin family. Short-chain subfamily. Type IA cytotoxin sub-subfamily. As to quaternary structure, monomer, or heterodimer with alpha-cobratoxin (AC P01391); disulfide-linked. In terms of tissue distribution, expressed by the venom gland.

It localises to the secreted. The protein localises to the target cell membrane. Functionally, monomer: shows cytolytic activity (apoptosis is induced in C2C12 cells, but no cytotoxicity is observed on INS-1E). In addition, this toxin shows insulinotropic activity that may be mediated by the modulation of potassium channels (Kv). It induces the increase of intracellular calcium release. It induces insulin secretion from rat INS-1E cells in absence and in presence of glucose, without affecting cell viability and integrity. In presence of glucose, the insulinotropic activity is increased, suggesting a possible synergistic effect with glucose. Its insulinotropic activity does not involve GLP-1R signaling. Heterodimer: has no cytolytic activity, but retains most of the alpha-cobratoxin capacity to compete with alpha-bungarotoxin for binding to Torpedo and alpha-7/CHRNA7 nicotinic acetylcholine receptors (nAChRs) as well as to Lymnea stagnalis acetylcholine-binding protein. The chain is Cytotoxin 1 from Naja kaouthia (Monocled cobra).